The primary structure comprises 416 residues: UDP-N-acetylmuramoylalanine--D-glutamate ligase (416 aa).

104-110 lines the ATP pocket; the sequence is GSNGKST.

This sequence belongs to the MurCDEF family.

It is found in the cytoplasm. It carries out the reaction UDP-N-acetyl-alpha-D-muramoyl-L-alanine + D-glutamate + ATP = UDP-N-acetyl-alpha-D-muramoyl-L-alanyl-D-glutamate + ADP + phosphate + H(+). It functions in the pathway cell wall biogenesis; peptidoglycan biosynthesis. Its function is as follows. Cell wall formation. Catalyzes the addition of glutamate to the nucleotide precursor UDP-N-acetylmuramoyl-L-alanine (UMA). This Francisella tularensis subsp. tularensis (strain FSC 198) protein is UDP-N-acetylmuramoylalanine--D-glutamate ligase.